Reading from the N-terminus, the 938-residue chain is MSDYKSTLNLPETGFPMRGDLAKREPGMLQRWYDDKLYSIIREAKKGKKTFILHDGPPYANGSIHIGHSVNKILKDIIVKSKGMAGYDSPYVPGWDCHGLPIEHKVEQTIGKPGEKVSAAEFRAACRQYAAEQVEGQKADFIRLGVLGDWDRPYLTMDFKTEANIIRALGKIIGNGHLHKGAKPVHWCLDCRSALAEAEVEYYDKTSPSIDVMFDAVDKDAVQAKFGAAHVNGPISLVIWTTTPWTMPANRAISLHPEFDYQLVQVEGRALILAKDMVDSVMKRVGVTQWTVLGDVQGAALELMGFQHPFLAHVSPVVLGEHVTLEAGTGAVHTAPGHGPDDYVIGQKYGIETANPVGPDGSFLPGTYPTLDGLNVFKANDTIVELLREKGALLHLEKLHHSYPHCWRHKTPIIFRATPQWFISMDQKGLRAQSLKEIKGVQWIPDWGQARIESMVANRPDWCISRQRTWGVPMALFVHKDTEQLHPDSLELMEKVALRVEQDGIQAWWDLDARELMGADADNYVKVPDTLDVWFDSGSTSYSVVDARPEFGGSAPDLYLEGSDQHRGWFMSSLMISTAMKGKAPYRQVLTHGFTVDGQGRKMSKSLGNTVSPQDVMNKLGADILRLWVASTDYSGEIAVSDEILKRSADSYRRIRNTARFLLANLAGFNPETDKVKPEEMVVVDRWAVGRALAAQNDIVASYEAYDFHEVVQRLMQFCSVEMGSFYLDIIKDRQYTAKADGLARRSCQTALWYIVEALVRWMAPIMSFTADEIWGYLPGKRAQYVFTEEWFDGLFSLEDNQPMNDAYWAELLKVRGEVNKVIEQARADKRVGGSLEASVTLYADAQLAEKLTSLGEELRFVLLTSGAEVADYAGAPDDAQQSETVKGLKIALRKAEGEKCPRCWHYTSDIGQNAEHADMCGRCVTNVAGSGEERKFA.

Positions 58 to 68 (PYANGSIHIGH) match the 'HIGH' region motif. Residue E561 participates in L-isoleucyl-5'-AMP binding. The 'KMSKS' region motif lies at 602–606 (KMSKS). Residue K605 participates in ATP binding. Residues C901, C904, C921, and C924 each contribute to the Zn(2+) site.

The protein belongs to the class-I aminoacyl-tRNA synthetase family. IleS type 1 subfamily. In terms of assembly, monomer. It depends on Zn(2+) as a cofactor.

It is found in the cytoplasm. The enzyme catalyses tRNA(Ile) + L-isoleucine + ATP = L-isoleucyl-tRNA(Ile) + AMP + diphosphate. Catalyzes the attachment of isoleucine to tRNA(Ile). As IleRS can inadvertently accommodate and process structurally similar amino acids such as valine, to avoid such errors it has two additional distinct tRNA(Ile)-dependent editing activities. One activity is designated as 'pretransfer' editing and involves the hydrolysis of activated Val-AMP. The other activity is designated 'posttransfer' editing and involves deacylation of mischarged Val-tRNA(Ile). The polypeptide is Isoleucine--tRNA ligase (Erwinia tasmaniensis (strain DSM 17950 / CFBP 7177 / CIP 109463 / NCPPB 4357 / Et1/99)).